The chain runs to 100 residues: Urease subunit gamma (100 aa).

It belongs to the urease gamma subunit family. In terms of assembly, heterotrimer of UreA (gamma), UreB (beta) and UreC (alpha) subunits. Three heterotrimers associate to form the active enzyme.

Its subcellular location is the cytoplasm. The enzyme catalyses urea + 2 H2O + H(+) = hydrogencarbonate + 2 NH4(+). Its pathway is nitrogen metabolism; urea degradation; CO(2) and NH(3) from urea (urease route): step 1/1. The chain is Urease subunit gamma from Burkholderia multivorans (strain ATCC 17616 / 249).